We begin with the raw amino-acid sequence, 954 residues long: Protein teashirt (954 aa).

Disordered stretches follow at residues 20 to 91 (LPTA…SLPS), 167 to 207 (ESAE…PQLG), and 276 to 331 (VKGG…GSGA). Over residues 47 to 57 (HGGGAGSGGVG) the composition is skewed to gly residues. Polar residues predominate over residues 292-303 (SKATTPQAASQP). Residues 318-328 (SGGGSGGGAAG) are compositionally biased toward gly residues. A C2H2-type 1 zinc finger spans residues 354–378 (FRCVWCKQSFPTLEALTTHMKDSKH). Residues 383–444 (VPPFGNLPSN…YRGDPPTPLP (62 aa)) form a disordered region. Residues 417-428 (SGSASNHSPSAN) are compositionally biased toward low complexity. C2H2-type zinc fingers lie at residues 466–490 (LKCMRCGESFRSLGEMTKHMQETQH) and 533–557 (LTCKVCDKAFNSLGDLSNHMAKNNH). Disordered stretches follow at residues 563-622 (LQSA…DKND), 689-714 (FDTPPRHASLPASSPSNSSTKNTSPV), and 748-935 (TSSE…NLTA). Residues 568-578 (ARKRPAPKKRE) show a composition bias toward basic residues. Residues 579-588 (KSLPVRKLLE) show a composition bias toward basic and acidic residues. A compositionally biased stretch (low complexity) spans 696–712 (ASLPASSPSNSSTKNTS). S750 and S758 each carry phosphoserine. The span at 778 to 807 (GHDEESSKPAIKQEREAESKPVKMEIKSEF) shows a compositional bias: basic and acidic residues. Over residues 842-851 (PKTPSSAASP) the composition is skewed to low complexity. Polar residues-rich tracts occupy residues 862-885 (AESQRSVTPKSPASSHKSYDGSSE) and 893-907 (DSLNALSSMFDSLGS). Residues 910–926 (AGANSRAKLAAAAAAGG) are compositionally biased toward low complexity.

This sequence belongs to the teashirt C2H2-type zinc-finger protein family. In terms of assembly, binds arm. In terms of tissue distribution, shows a dynamic expression pattern during embryogenesis. Expressed in the embryonic trunk region (PS 3-13) with expression strongest in the thoracic segments. Expressed in a small group of cells corresponding to the anal tuft from stage 14. Strongly expressed in the embryonic ventral nerve cord. Also expressed in the proximal domain of the leg imaginal disk and in the region of the wing disk that will give rise to the proximal wing hinge. Expressed at high levels in the anterior and central embryonic midgut mesoderm and in the embryonic midgut endoderm. Expressed at a low level in more posterior visceral mesoderm of the gut. From stage 12 onwards, tsh and tio are colocalized in some cells of the CNS, trunk epidermis, hindgut and Malpighian tubules.

Its subcellular location is the nucleus. The protein resides in the cytoplasm. Functionally, homeotic protein that acts downstream of Arm in the Wg cascade during embryogenesis to determine segment identity throughout the entire trunk. Acts cooperatively with other trunk homeotic proteins to repress head homeotic genes and therefore repress head segmental identity. Necessary, in combination with Scr, for the formation of the prothoracic segment. Promotes eye development in the dorsal region of the eye disk and suppresses eye development in the ventral region in combination with Wg-signaling and several early dorso-ventral eye patterning genes. Required for proper development of proximal leg segments. Has differential functions along the dorso-ventral axs of the antennal and leg disks. May play a role in wing hinge development. Possible involvement in chromatin structure for modulation of transcription. Binds DNA and can act as both a transcriptional repressor and activator. Positively regulates its own expression as well as that of Dll. Negatively regulates the expression of mod. Required for Wg-mediated transcriptional repression of Ubx in the midgut. Also represses transcription of lab in the midgut and is necessary for the proper formation of anterior and central midgut structures. Tiptop (tio) and teashirt (tsh) have, on the whole, common activities. Tio and tsh repress each other's expression and tsh has a crucial role for trunk patterning that is in part masked by ectopic expression of tiptop. Both genes share a common activity required for the activation of Ser and svb and the maintenance of en and wg. This Drosophila melanogaster (Fruit fly) protein is Protein teashirt (tsh).